The following is a 194-amino-acid chain: uncharacterized protein (194 aa).

The HTH tetR-type domain maps to 2–62 (QGPRERMVVS…CEAVDYAGEH (61 aa)). Positions 25–44 (AISDVLQHSGAPRGSAYHYF) form a DNA-binding region, H-T-H motif.

This is an uncharacterized protein from Mycobacterium tuberculosis (strain CDC 1551 / Oshkosh).